The sequence spans 560 residues: Thermosome subunit 1 (560 aa).

The tract at residues 525 to 550 (LSGGQTGSDDDDGGAPGGMGGGMGGM) is disordered. Residues 538–550 (GAPGGMGGGMGGM) are compositionally biased toward gly residues.

Belongs to the TCP-1 chaperonin family. In terms of assembly, the thermosome or CCT complex is a oligomeric complex of two octameric double-ring structures; the complex is probably a heterooligomer of CCT1, CCT2 and CCT3 with yet unknown stoichiometry.

Molecular chaperone that assists in the folding or refolding of nascent or denatured proteins along with ATP hydrolysis. ATPase activity is highest in thermosome assemblies containing CCT1:CCT2, followed by assemblies containing CCT1:CCT2:CCT3. Required for thermosome ATPase activity. Not required for growth. This Haloferax volcanii (strain ATCC 29605 / DSM 3757 / JCM 8879 / NBRC 14742 / NCIMB 2012 / VKM B-1768 / DS2) (Halobacterium volcanii) protein is Thermosome subunit 1 (cct1).